The sequence spans 242 residues: MSFLIVANWKMNGMRSSFVDFIGKLNNKSNEITSKLVICPPFTSFPSSIELNNNIDIGAQNCHHKKFGSYTGEISAEMLKELGCTYVMLGHSERANEKDSEIKLKSEIAIESGLHPIICVGENSEDYKNEKTKEVIEYQCKNRLPTHGEYTVAYEPIWAIGTGHVPNNDAIAKVIEVIKLCTSKKHIIYGGSVSSENIENLLSISNLSGVLIGSASLDFDHFYKIIQQVEKKFSLINSKISN.

8–10 (NWK) provides a ligand contact to substrate. The active-site Electrophile is the His91. Residue Glu155 is the Proton acceptor of the active site. Residues Gly161 and Ser192 each coordinate substrate.

It belongs to the triosephosphate isomerase family. Homodimer.

The protein localises to the cytoplasm. The enzyme catalyses D-glyceraldehyde 3-phosphate = dihydroxyacetone phosphate. It functions in the pathway carbohydrate biosynthesis; gluconeogenesis. Its pathway is carbohydrate degradation; glycolysis; D-glyceraldehyde 3-phosphate from glycerone phosphate: step 1/1. Functionally, involved in the gluconeogenesis. Catalyzes stereospecifically the conversion of dihydroxyacetone phosphate (DHAP) to D-glyceraldehyde-3-phosphate (G3P). The sequence is that of Triosephosphate isomerase from Wolbachia pipientis wMel.